The chain runs to 316 residues: MSYDSLMVFTGTANPKLAHDVVKYLNINLGRANVGRFSDGEVMVEILENVRGNDVFVLQSTCTPTNDSLMEILVIVDALKRASASRVTAAIPYFGYARQDRRTRSARVPITAKVVANMLTSVGVDRVLTMDLHSDQIQGFFDIPVDNVYGMPILLGDIWKHDYQNLIVVSPDVGGVVRARHLAKRLECDLAIIDKRRPKPNESKVMNIIGDVRGRTCVIIDDMVDTANTLCEAASALKREGAASVIAYSTHAVLSGKAVERVQTSDLDKLVVTDTIPLREDASKCNRIHQLSVASLLGESMLRISNESSLSSLFIE.

ATP-binding positions include 39-41 (DGE) and 98-99 (RQ). Residues H133 and D172 each coordinate Mg(2+). K195 is a catalytic residue. D-ribose 5-phosphate contacts are provided by residues R197, D221, and 225-229 (DTANT).

Belongs to the ribose-phosphate pyrophosphokinase family. Class I subfamily. Homohexamer. Mg(2+) is required as a cofactor.

Its subcellular location is the cytoplasm. It carries out the reaction D-ribose 5-phosphate + ATP = 5-phospho-alpha-D-ribose 1-diphosphate + AMP + H(+). The protein operates within metabolic intermediate biosynthesis; 5-phospho-alpha-D-ribose 1-diphosphate biosynthesis; 5-phospho-alpha-D-ribose 1-diphosphate from D-ribose 5-phosphate (route I): step 1/1. Involved in the biosynthesis of the central metabolite phospho-alpha-D-ribosyl-1-pyrophosphate (PRPP) via the transfer of pyrophosphoryl group from ATP to 1-hydroxyl of ribose-5-phosphate (Rib-5-P). This Nitrosomonas europaea (strain ATCC 19718 / CIP 103999 / KCTC 2705 / NBRC 14298) protein is Ribose-phosphate pyrophosphokinase.